The chain runs to 257 residues: MSLLSKTRELNTLLQKHKGIAVDFKDVAQTISSVTVTNVFIVSRKGKILGSNLNELLKNERIIQMLENRHIPVEYTDQLMDVKETQSNIGIDNVLTVFPPENNDLFGDSRTTIFPILGGGERLGTLVLGRVTEDFSENDLVLGEYAATVIGMEILREKHNEVEQEARDKAAISMAINSLSYSESEAIEHIFEELGGKEGLLIASKVADRVGITRSVIVNALRKLESAGVIESRSLGMKGTFIKVKKDKFLDELERIK.

Residues 1–155 form a GAF domain region; that stretch reads MSLLSKTREL…AATVIGMEIL (155 aa). A DNA-binding region (H-T-H motif) is located at residues 203–222; sequence ASKVADRVGITRSVIVNALR.

It belongs to the CodY family.

Its subcellular location is the cytoplasm. DNA-binding global transcriptional regulator which is involved in the adaptive response to starvation and acts by directly or indirectly controlling the expression of numerous genes in response to nutrient availability. During rapid exponential growth, CodY is highly active and represses genes whose products allow adaptation to nutrient depletion. This is Global transcriptional regulator CodY from Staphylococcus saprophyticus subsp. saprophyticus (strain ATCC 15305 / DSM 20229 / NCIMB 8711 / NCTC 7292 / S-41).